The primary structure comprises 714 residues: RB-associated KRAB zinc finger protein (714 aa).

The KRAB domain maps to 8–79 (VSFKDVAVDF…GGEFPCQHSP (72 aa)). Residues lysine 97 and lysine 259 each participate in a glycyl lysine isopeptide (Lys-Gly) (interchain with G-Cter in SUMO2) cross-link. Residues 171 to 260 (TYHGEKMCEF…YQRSQMEMKP (90 aa)) are required for interaction with RB1. C2H2-type zinc fingers lie at residues 261–283 (FECS…QRAH) and 289–311 (YECN…RRSH). A Glycyl lysine isopeptide (Lys-Gly) (interchain with G-Cter in SUMO2) cross-link involves residue lysine 315. 7 C2H2-type zinc fingers span residues 317–339 (YKCN…LRTH), 345–367 (YECS…QRNH), 373–395 (YPCN…QRTH), 401–423 (YKCN…QRTH), 429–451 (YQCS…YRSH), 457–479 (YECN…RKVH), and 485–505 (HECS…HTAH). A Glycyl lysine isopeptide (Lys-Gly) (interchain with G-Cter in SUMO2) cross-link involves residue lysine 357. The interaction with AR stretch occupies residues 417 to 714 (ITHQRTHTGE…NMNVLDVENL (298 aa)). The C2H2-type 10; degenerate zinc-finger motif lies at 511–533 (YECNECGKTFLVNSAFDGHQPLP). Residues lysine 534 and lysine 537 each participate in a glycyl lysine isopeptide (Lys-Gly) (interchain with G-Cter in SUMO2) cross-link. 6 consecutive C2H2-type zinc fingers follow at residues 539-561 (YECN…YRSH), 567-589 (YGCS…QRVH), 595-617 (YECY…HRIH), 623-645 (YECS…YRSH), 651-673 (YECN…YRTH), and 679-701 (YECN…QRIH).

Belongs to the krueppel C2H2-type zinc-finger protein family. Interacts with AR and RB1. May also interact with other nuclear hormone receptors such as NR3C1/GR. Expressed in bone, brain, heart, kidney, liver, lung, pancreas and placenta.

It is found in the nucleus. Functionally, may repress E2F-dependent transcription. May promote AR-dependent transcription. This is RB-associated KRAB zinc finger protein (RBAK) from Homo sapiens (Human).